A 65-amino-acid chain; its full sequence is DNA gyrase inhibitor YacG (65 aa).

Zn(2+) contacts are provided by Cys9, Cys12, Cys28, and Cys32. The interval 44–65 (EKRIPSSSDLSESDDWSEEPKQ) is disordered. Positions 54 to 65 (SESDDWSEEPKQ) are enriched in acidic residues.

It belongs to the DNA gyrase inhibitor YacG family. Interacts with GyrB. The cofactor is Zn(2+).

Functionally, inhibits all the catalytic activities of DNA gyrase by preventing its interaction with DNA. Acts by binding directly to the C-terminal domain of GyrB, which probably disrupts DNA binding by the gyrase. This chain is DNA gyrase inhibitor YacG, found in Escherichia coli O6:H1 (strain CFT073 / ATCC 700928 / UPEC).